Here is a 273-residue protein sequence, read N- to C-terminus: MFGVKDAIFKIKRSIAGTDSSDSTAYTTASESSPQLKDSHNPFRNKTTSERTIVEEGSLPPVRLNGYLPSTKNKLLTPEMCDEIRTLMPTRIQLYTEWNLLYSLEQHGSSLHSLYSNVAPDSKEFRRVGYVLVIKDRKNGIFGAYSNEAFHPNEHRQYTGNGECFLWKLDKVPDVNISEKEESEQEGKEGKEEGDKEERWRFSGYPYTGVNEFAIYCTSEFLSMGAGDGHYGLLCDDGLLHGVSNPCQTYGNEVLSKEGKKFSIVALEVWRVG.

Methionine 1 carries the N-acetylmethionine modification. The segment covering 18 to 33 (TDSSDSTAYTTASESS) has biased composition (low complexity). Disordered regions lie at residues 18–48 (TDSS…NKTT) and 177–197 (ISEK…GDKE). Over residues 37 to 48 (KDSHNPFRNKTT) the composition is skewed to basic and acidic residues. Positions 74–273 (KLLTPEMCDE…IVALEVWRVG (200 aa)) constitute a TLDc domain. Phosphoserine is present on serine 178.

It belongs to the OXR1 family.

The protein localises to the mitochondrion. In terms of biological role, involved in protection from oxidative damage. The polypeptide is Oxidation resistance protein 1 (OXR1) (Saccharomyces cerevisiae (strain ATCC 204508 / S288c) (Baker's yeast)).